The primary structure comprises 447 residues: N-succinylarginine dihydrolase (447 aa).

Residues 19–28, N110, and 137–138 each bind substrate; these read AGLSFGNEAS and HR. Residue E174 is part of the active site. A substrate-binding site is contributed by R212. H248 is an active-site residue. Substrate is bound by residues D250 and N359. Catalysis depends on C365, which acts as the Nucleophile.

This sequence belongs to the succinylarginine dihydrolase family. In terms of assembly, homodimer.

The enzyme catalyses N(2)-succinyl-L-arginine + 2 H2O + 2 H(+) = N(2)-succinyl-L-ornithine + 2 NH4(+) + CO2. It participates in amino-acid degradation; L-arginine degradation via AST pathway; L-glutamate and succinate from L-arginine: step 2/5. Catalyzes the hydrolysis of N(2)-succinylarginine into N(2)-succinylornithine, ammonia and CO(2). This Salmonella schwarzengrund (strain CVM19633) protein is N-succinylarginine dihydrolase.